Consider the following 148-residue polypeptide: Ribonuclease pancreatic (148 aa).

A signal peptide spans 1–25 (MGLEKSLILFPLLVLVVGWVQPSLG). Residues K32, R35, 65–69 (KPVNT), K90, and R109 contribute to the substrate site. 4 cysteine pairs are disulfide-bonded: C50–C108, C64–C119, C82–C134, and C89–C96. The active-site Proton donor is H143.

It belongs to the pancreatic ribonuclease family. As to quaternary structure, monomer. Interacts with and forms tight 1:1 complexes with RNH1. Dimerization of two such complexes may occur. Interaction with RNH1 inhibits this protein. Pancreas.

It is found in the secreted. The enzyme catalyses an [RNA] containing cytidine + H2O = an [RNA]-3'-cytidine-3'-phosphate + a 5'-hydroxy-ribonucleotide-3'-[RNA].. It carries out the reaction an [RNA] containing uridine + H2O = an [RNA]-3'-uridine-3'-phosphate + a 5'-hydroxy-ribonucleotide-3'-[RNA].. Functionally, endonuclease that catalyzes the cleavage of RNA on the 3' side of pyrimidine nucleotides. Acts on single-stranded and double-stranded RNA. This chain is Ribonuclease pancreatic (RNASE1), found in Peromyscus leucopus (White-footed mouse).